A 114-amino-acid polypeptide reads, in one-letter code: MSNDNILKNIHEINLSYLLLAQELIKQDKKVASFRLGVCEDTLNKISKLSLSELIKLGAINQLICLLRLDDEKVINCLTRESRVDELQQVHTGIMLSTQLLRSHKSNSNHALKE.

Belongs to the FlhD family. Homodimer; disulfide-linked. Forms a heterohexamer composed of two FlhC and four FlhD subunits. Each FlhC binds a FlhD dimer, forming a heterotrimer, and a hexamer assembles by dimerization of two heterotrimers.

It is found in the cytoplasm. Functions in complex with FlhC as a master transcriptional regulator that regulates transcription of several flagellar and non-flagellar operons by binding to their promoter region. Activates expression of class 2 flagellar genes, including fliA, which is a flagellum-specific sigma factor that turns on the class 3 genes. Also regulates genes whose products function in a variety of physiological pathways. The sequence is that of Flagellar transcriptional regulator FlhD from Wigglesworthia glossinidia brevipalpis.